A 186-amino-acid polypeptide reads, in one-letter code: ADP-ribosylation factor-like protein 8B (186 aa).

The note=Mediates targeting to membranes intramembrane region spans 1 to 19 (MLALISRLLDWFRSLFWKE). GTP contacts are provided by residues 29–35 (QYSGKTT), 71–75 (DIGGQ), and 130–133 (NKRD). Residue Lys-141 forms a Glycyl lysine isopeptide (Lys-Gly) (interchain with G-Cter in ubiquitin) linkage.

It belongs to the small GTPase superfamily. Arf family. As to quaternary structure, interacts with tubulin. Interacts with BORCS5; recruits ARL8B to lysosomes. Interacts with VPS41; the interaction mediates the recruitment of the HOPS complex to lysosomes. Interacts (GTP-bound form) with PLEKHM2 (via RUN domain); the interaction is required to recruit the motor protein kinesin-1 on lysosomes. Interacts (GTP-bound form) with PLEKHM1 (via RUN domain); the interaction is required for PLEKHM1 localization to lysosomes and for ARL8B function in delivery and degradation of endocytic and autophagic cargo in lysosomes. PLEKHM1 and PLEKHM2 compete for interaction with ARL8B. Interacts (GTP-bound form) with RUFY1; the interaction is required for RUFY1 endosomal location. When GTP-bound, interacts with RUFY3 and RUFY4, but not with RUFY1, nor RUFY2. Ubiquitinated at Lys-141 by RNF167, leading to its degradation.

The protein resides in the late endosome membrane. It localises to the lysosome membrane. Its subcellular location is the cytoplasm. The protein localises to the cytoskeleton. It is found in the spindle. The protein resides in the cell projection. It localises to the axon. Its subcellular location is the synapse. The protein localises to the cytolytic granule membrane. It is found in the early endosome membrane. The enzyme catalyses GTP + H2O = GDP + phosphate + H(+). Its function is as follows. Small GTPase which cycles between active GTP-bound and inactive GDP-bound states. In its active state, binds to a variety of effector proteins playing a key role in the regulation of lysosomal positioning which is important for nutrient sensing, natural killer cell-mediated cytotoxicity and antigen presentation. Along with its effectors, orchestrates lysosomal transport and fusion. Localizes specifically to lysosomal membranes and mediates anterograde lysosomal motility by recruiting PLEKHM2, which in turn recruits the motor protein kinesin-1 on lysosomes. Required for lysosomal and cytolytic granule exocytosis. Critical factor involved in NK cell-mediated cytotoxicity. Drives the polarization of cytolytic granules and microtubule-organizing centers (MTOCs) toward the immune synapse between effector NK lymphocytes and target cells. In neurons, mediates the anterograde axonal long-range transport of presynaptic lysosome-related vesicles required for presynaptic biogenesis and synaptic function. Also acts as a regulator of endosome to lysosome trafficking pathways of special significance for host defense. Recruits RUFY1 onto early endosomes regulating endosomes to trans-Golgi network proteins retrieval. Regulates cargo trafficking to lysosomes by binding to PLEKHM1 and recruiting the HOPS subunit VPS41, resulting in functional assembly of the HOPS complex on lysosomal membranes. Plays an important role in cargo delivery to lysosomes for antigen presentation and microbial killing. Directs the intersection of CD1d with lipid antigens in lysosomes, and plays a role in intersecting phagosomes with lysosomes to generate phagolysosomes that kill microbes. Involved in the process of MHC II presentation. Regulates the delivery of antigens to lysosomes and the formation of MHC II-peptide complexes through the recruitment of the HOPS complex to lysosomes allowing the fusion of late endosomes to lysosomes. May play a role in chromosome segregation. The chain is ADP-ribosylation factor-like protein 8B (ARL8B) from Pongo abelii (Sumatran orangutan).